The following is a 740-amino-acid chain: Ion-translocating oxidoreductase complex subunit C (740 aa).

4Fe-4S ferredoxin-type domains lie at 369–397 (GEPQ…QQLY) and 407–436 (KATT…VQYF). Residues Cys377, Cys380, Cys383, Cys387, Cys416, Cys419, Cys422, and Cys426 each coordinate [4Fe-4S] cluster. Disordered stretches follow at residues 571–590 (LEQQ…RKAA) and 602–716 (KLEQ…DPRK). Composition is skewed to low complexity over residues 573-583 (QQQANAEPEQQ) and 637-647 (QQQANAEPEQQ).

It belongs to the 4Fe4S bacterial-type ferredoxin family. RnfC subfamily. The complex is composed of six subunits: RsxA, RsxB, RsxC, RsxD, RsxE and RsxG. [4Fe-4S] cluster serves as cofactor.

The protein localises to the cell inner membrane. In terms of biological role, part of a membrane-bound complex that couples electron transfer with translocation of ions across the membrane. Required to maintain the reduced state of SoxR. Probably transfers electron from NAD(P)H to SoxR. In Escherichia coli (strain K12), this protein is Ion-translocating oxidoreductase complex subunit C.